The chain runs to 78 residues: Large ribosomal subunit protein bL28 (78 aa).

The disordered stretch occupies residues 1-21 (MSRVCQVTGKKPMVGNNRSHA).

Belongs to the bacterial ribosomal protein bL28 family.

This Shewanella piezotolerans (strain WP3 / JCM 13877) protein is Large ribosomal subunit protein bL28.